The primary structure comprises 370 residues: Peptide chain release factor 2 (370 aa).

Gln-249 carries the N5-methylglutamine modification.

The protein belongs to the prokaryotic/mitochondrial release factor family. In terms of processing, methylated by PrmC. Methylation increases the termination efficiency of RF2.

It is found in the cytoplasm. Its function is as follows. Peptide chain release factor 2 directs the termination of translation in response to the peptide chain termination codons UGA and UAA. In Kosmotoga olearia (strain ATCC BAA-1733 / DSM 21960 / TBF 19.5.1), this protein is Peptide chain release factor 2.